Consider the following 396-residue polypeptide: Tryptophan synthase beta chain (396 aa).

At Lys-90 the chain carries N6-(pyridoxal phosphate)lysine.

This sequence belongs to the TrpB family. Tetramer of two alpha and two beta chains. It depends on pyridoxal 5'-phosphate as a cofactor.

The enzyme catalyses (1S,2R)-1-C-(indol-3-yl)glycerol 3-phosphate + L-serine = D-glyceraldehyde 3-phosphate + L-tryptophan + H2O. The protein operates within amino-acid biosynthesis; L-tryptophan biosynthesis; L-tryptophan from chorismate: step 5/5. Its function is as follows. The beta subunit is responsible for the synthesis of L-tryptophan from indole and L-serine. The sequence is that of Tryptophan synthase beta chain from Clostridium kluyveri (strain NBRC 12016).